The following is a 743-amino-acid chain: Putative pre-mRNA-splicing factor ATP-dependent RNA helicase DHX32 (743 aa).

Methionine 1 carries the post-translational modification N-acetylmethionine. Positions 1 to 28 (MEEEGLECPNSSSEKRYFPESLDSSDGD) are disordered. One can recognise a Helicase ATP-binding domain in the interval 72-238 (MENLLQNQIV…YGNVPVIEVK (167 aa)). Position 85–92 (85–92 (GDAKCGKS)) interacts with ATP. Residues 185–188 (DDIH) carry the DEAH box motif.

The protein belongs to the DEAD box helicase family. DEAH subfamily. In terms of tissue distribution, expressed in lymphoid tissues (at protein level). Expressed in brain, heart, skeletal muscle, colon, thymus, spleen, kidney, liver, small intestine, placenta, lung, lymphoid tissues and blood leukocytes.

It is found in the nucleus. The protein localises to the mitochondrion. It catalyses the reaction ATP + H2O = ADP + phosphate + H(+). This chain is Putative pre-mRNA-splicing factor ATP-dependent RNA helicase DHX32 (DHX32), found in Homo sapiens (Human).